A 209-amino-acid polypeptide reads, in one-letter code: MADSKEIKRVLLGPLFDNNPIALQILGVCSALAVTTKLETALVMTLAVTLVTAFSSFFISLIRNHIPNSVRIIVQMVIIASLVIVVDQILRAYAYEISKQLSVFVGLIITNCIVMGRAEAYAMKSPPIESFMDGIGNGLGYGVVLVLVGFVRELIGSGKLFGVTVLETVQNGGWYQPNGLFLLAPSAFFIIGLLIWGLRTLKPAQIEKE.

5 helical membrane passes run 42 to 62 (LVMT…ISLI), 70 to 90 (VRII…DQIL), 103 to 123 (VFVG…AYAM), 131 to 151 (FMDG…VGFV), and 178 to 198 (NGLF…IWGL).

The protein belongs to the NqrDE/RnfAE family. In terms of assembly, composed of six subunits; NqrA, NqrB, NqrC, NqrD, NqrE and NqrF.

The protein resides in the cell inner membrane. It catalyses the reaction a ubiquinone + n Na(+)(in) + NADH + H(+) = a ubiquinol + n Na(+)(out) + NAD(+). NQR complex catalyzes the reduction of ubiquinone-1 to ubiquinol by two successive reactions, coupled with the transport of Na(+) ions from the cytoplasm to the periplasm. NqrA to NqrE are probably involved in the second step, the conversion of ubisemiquinone to ubiquinol. In Yersinia enterocolitica serotype O:8 / biotype 1B (strain NCTC 13174 / 8081), this protein is Na(+)-translocating NADH-quinone reductase subunit D.